The following is a 236-amino-acid chain: Coat protein (236 aa).

Positions 1 to 27 are disordered; the sequence is MTTPANTTQAVGSTTSTTTTTAGATPA. Positions 7–27 are enriched in low complexity; the sequence is TTQAVGSTTSTTTTTAGATPA.

The protein belongs to the potexvirus capsid protein family.

It is found in the virion. In terms of biological role, required for genome encapsidation. Forms ribonucleoprotein complexes along with TGB1 helicase and viral RNA. This Brassica campestris (Field mustard) protein is Coat protein.